Here is a 184-residue protein sequence, read N- to C-terminus: MQLQVARIGKPHGIRGEVTVQVLTDAPSERFVAGTEFVVEPASAGPLTIRSARWNKDILLLGFEEIADRNAAEVIRGAKLFIETEELSDEDDDEGWYEHELVGLEARVGSQVVGKVAALSTLPVQDLLTVTTEEGKEILIPFVDEIVPEVNVEGGYILITPPSGLFEINDENAKEPKDGAGDDA.

The 73-residue stretch at 93–165 folds into the PRC barrel domain; that stretch reads DEGWYEHELV…YILITPPSGL (73 aa).

Belongs to the RimM family. In terms of assembly, binds ribosomal protein uS19.

The protein resides in the cytoplasm. An accessory protein needed during the final step in the assembly of 30S ribosomal subunit, possibly for assembly of the head region. Essential for efficient processing of 16S rRNA. May be needed both before and after RbfA during the maturation of 16S rRNA. It has affinity for free ribosomal 30S subunits but not for 70S ribosomes. The sequence is that of Ribosome maturation factor RimM from Paenarthrobacter aurescens (strain TC1).